A 75-amino-acid polypeptide reads, in one-letter code: Small ribosomal subunit protein bS18 (75 aa).

The protein belongs to the bacterial ribosomal protein bS18 family. As to quaternary structure, part of the 30S ribosomal subunit. Forms a tight heterodimer with protein bS6.

In terms of biological role, binds as a heterodimer with protein bS6 to the central domain of the 16S rRNA, where it helps stabilize the platform of the 30S subunit. In Buchnera aphidicola subsp. Baizongia pistaciae (strain Bp), this protein is Small ribosomal subunit protein bS18.